A 266-amino-acid polypeptide reads, in one-letter code: Beta-lactamase OXA-20 (266 aa).

The N-terminal stretch at 1 to 21 is a signal peptide; sequence MIIRFLALLFSAVVLVSLGHA. Residue Ser72 is the Acyl-ester intermediate of the active site. N6-carboxylysine is present on Lys75. Substrate is bound at residue 210–212; that stretch reads KTG.

This sequence belongs to the class-D beta-lactamase family.

The catalysed reaction is a beta-lactam + H2O = a substituted beta-amino acid. Inhibited by clavulanic acid. Its function is as follows. This is an oxacillin-hydrolyzing beta-lactamase. This is Beta-lactamase OXA-20 (bla) from Pseudomonas aeruginosa.